The sequence spans 469 residues: Neuraminidase (469 aa).

The Intravirion portion of the chain corresponds to 1-6; the sequence is MNPNQK. The chain crosses the membrane as a helical span at residues 7 to 27; that stretch reads IITIGSICMVVGIISLILQIG. The interval 11–33 is involved in apical transport and lipid raft association; the sequence is GSICMVVGIISLILQIGNIVSIW. At 28-469 the chain is on the virion surface side; sequence NIVSIWISHS…GAELPFTIDK (442 aa). The hypervariable stalk region stretch occupies residues 36–90; it reads HSIQTGNQNHTGTCNQSIITYKNSTWVNQTYVNISNTNVVAGKDTTSVILAGNSS. 6 N-linked (GlcNAc...) asparagine; by host glycosylation sites follow: asparagine 44, asparagine 50, asparagine 58, asparagine 63, asparagine 68, and asparagine 88. Residues 91–469 are head of neuraminidase; sequence LCPIRGWAIY…GAELPFTIDK (379 aa). Disulfide bonds link cysteine 92–cysteine 417, cysteine 124–cysteine 129, cysteine 184–cysteine 231, cysteine 233–cysteine 238, cysteine 279–cysteine 292, cysteine 281–cysteine 290, cysteine 318–cysteine 335, and cysteine 421–cysteine 446. Arginine 118 lines the substrate pocket. Asparagine 146 carries an N-linked (GlcNAc...) asparagine; by host glycan. The active-site Proton donor/acceptor is the aspartate 151. Arginine 152 is a binding site for substrate. Asparagine 235 carries N-linked (GlcNAc...) asparagine; by host glycosylation. 277–278 serves as a coordination point for substrate; sequence EE. Arginine 293 is a binding site for substrate. Residues aspartate 294, glycine 298, aspartate 324, and asparagine 344 each contribute to the Ca(2+) site. Asparagine 365 carries N-linked (GlcNAc...) asparagine; by host glycosylation. Substrate is bound at residue arginine 368. The Nucleophile role is filled by tyrosine 402.

Belongs to the glycosyl hydrolase 34 family. As to quaternary structure, homotetramer. Ca(2+) is required as a cofactor. N-glycosylated.

The protein localises to the virion membrane. Its subcellular location is the host apical cell membrane. The catalysed reaction is Hydrolysis of alpha-(2-&gt;3)-, alpha-(2-&gt;6)-, alpha-(2-&gt;8)- glycosidic linkages of terminal sialic acid residues in oligosaccharides, glycoproteins, glycolipids, colominic acid and synthetic substrates.. Inhibited by the neuraminidase inhibitors zanamivir (Relenza) and oseltamivir (Tamiflu). These drugs interfere with the release of progeny virus from infected cells and are effective against all influenza strains. Resistance to neuraminidase inhibitors is quite rare. In terms of biological role, catalyzes the removal of terminal sialic acid residues from viral and cellular glycoconjugates. Cleaves off the terminal sialic acids on the glycosylated HA during virus budding to facilitate virus release. Additionally helps virus spread through the circulation by further removing sialic acids from the cell surface. These cleavages prevent self-aggregation and ensure the efficient spread of the progeny virus from cell to cell. Otherwise, infection would be limited to one round of replication. Described as a receptor-destroying enzyme because it cleaves a terminal sialic acid from the cellular receptors. May facilitate viral invasion of the upper airways by cleaving the sialic acid moieties on the mucin of the airway epithelial cells. Likely to plays a role in the budding process through its association with lipid rafts during intracellular transport. May additionally display a raft-association independent effect on budding. Plays a role in the determination of host range restriction on replication and virulence. Sialidase activity in late endosome/lysosome traffic seems to enhance virus replication. In Aves (Human), this protein is Neuraminidase.